A 988-amino-acid polypeptide reads, in one-letter code: Voltage-gated delayed rectifier potassium channel KCNH5 (988 aa).

Topologically, residues 1–217 (MPGGKRGLVA…LHYCAFKTTW (217 aa)) are cytoplasmic. Positions 14-86 (TFLENIVRRS…TIEKVRQTFD (73 aa)) constitute a PAS domain. Positions 91-143 (NCFEVLLYKKNRTPVWFYMQIAPIRNEHEKVVLFLCTFKDITLFKQPIEDDST) constitute a PAC domain. Residues 218-238 (DWVILILTFYTAIMVPYNVSF) traverse the membrane as a helical segment. At 239–243 (KTKQN) the chain is on the extracellular side. A helical membrane pass occupies residues 244–264 (NIAWLVLDSVVDVIFLVDIVL). Residues 265–291 (NFHTTFVGPGGEVISDPKLIRMNYLKT) are Cytoplasmic-facing. Residues 292–312 (WFVIDLLSCLPYDIINAFENV) traverse the membrane as a helical segment. Topologically, residues 313–319 (DEGISSL) are extracellular. A helical; Voltage-sensor membrane pass occupies residues 320 to 340 (FSSLKVVRLLRLGRVARKLDH). The Cytoplasmic segment spans residues 341 to 346 (YLEYGA). Residues 347-367 (AVLVLLVCVFGLVAHWLACIW) form a helical membrane-spanning segment. The Extracellular portion of the chain corresponds to 368-419 (YSIGDYEVIDEVTNTIQIDSWLYQLALSIGTPYRYNTSAGIWEGGPSKDSLY). Residue asparagine 403 is glycosylated (N-linked (GlcNAc...) asparagine). The pore-forming intramembrane region spans 420 to 440 (VSSLYFTMTSLTTIGFGNIAP). The Selectivity filter signature appears at 432–437 (TIGFGN). The Extracellular segment spans residues 441 to 446 (TTDVEK). The chain crosses the membrane as a helical span at residues 447-467 (MFSVAMMMVGSLLYATIFGNV). Over 468-988 (TTIFQQMYAN…PESDKDEINF (521 aa)) the chain is Cytoplasmic. Position 550–668 (550–668 (AFRLASDGCL…SFSRNLTLTC (119 aa))) interacts with a nucleoside 3',5'-cyclic phosphate. Residues 704–715 (HPVRKLFQKFKQ) are calmodulin-binding. The segment at 721–741 (IQGSAQSDPERSQLQVESRPL) is disordered. Residues 723 to 741 (GSAQSDPERSQLQVESRPL) are compositionally biased toward polar residues. Lysine 785 is covalently cross-linked (Glycyl lysine isopeptide (Lys-Gly) (interchain with G-Cter in ubiquitin)). Positions 838–893 (GLLSEDPKGSDSENSVTKNPLRKTDSCDSGITKSDLRLDKAGEARSPLEHSPSQAD) are disordered. Positions 871-885 (SDLRLDKAGEARSPL) are enriched in basic and acidic residues. The residue at position 883 (serine 883) is a Phosphoserine. Positions 909-948 (TLQEVKHELKEDIQLLSCRMTALEKQVAEILKLLSEKSVP) are CAD (involved in subunit assembly).

This sequence belongs to the potassium channel family. H (Eag) (TC 1.A.1.20) subfamily. Kv10.2/KCNH5 sub-subfamily. In terms of assembly, homotetramer. The potassium channel is probably composed of a homo- or heterotetrameric complex of pore-forming alpha subunits that can associate with modulating beta subunits. Heteromultimer with KCNH1/EAG.

It is found in the membrane. It catalyses the reaction K(+)(in) = K(+)(out). Functionally, pore-forming (alpha) subunit of a voltage-gated delayed rectifier potassium channel that mediates outward-rectifying potassium currents which, on depolarization, reaches a steady-state level and do not inactivate. The kinetic is characterized by a slow activation time course and a small voltage dependence of the activation time constants, therefore, starts to open at more negative voltages. The activation kinetics depend on the prepulse potential and external divalent cation concentration. The time course of activation is biphasic with a fast and a slowly activating current component. With negative prepulses, the current activation is delayed and slowed down several fold, whereas more positive prepulses speed up activation, therefore the activation rate depends on holding potential. In Mus musculus (Mouse), this protein is Voltage-gated delayed rectifier potassium channel KCNH5.